Reading from the N-terminus, the 571-residue chain is Apolipoprotein N-acyltransferase (571 aa).

6 helical membrane passes run 13-33, 51-68, 72-92, 118-138, 152-172, and 199-219; these read VVLW…IALV, LYAA…GLRY, LMFL…VLFI, LVAA…FTGI, MLIQ…IVCV, and LVTA…SMNA. Residues 234–527 form the CN hydrolase domain; sequence NELTVYEQDI…SDVIYAQPRR (294 aa). The active-site Proton acceptor is the Glu-275. Lys-380 is a catalytic residue. Cys-430 acts as the Nucleophile in catalysis. A helical transmembrane segment spans residues 542 to 562; it reads AGLMGAATLCGLAWMTFEWLM.

This sequence belongs to the CN hydrolase family. Apolipoprotein N-acyltransferase subfamily.

The protein resides in the cell inner membrane. The enzyme catalyses N-terminal S-1,2-diacyl-sn-glyceryl-L-cysteinyl-[lipoprotein] + a glycerophospholipid = N-acyl-S-1,2-diacyl-sn-glyceryl-L-cysteinyl-[lipoprotein] + a 2-acyl-sn-glycero-3-phospholipid + H(+). It participates in protein modification; lipoprotein biosynthesis (N-acyl transfer). Its function is as follows. Catalyzes the phospholipid dependent N-acylation of the N-terminal cysteine of apolipoprotein, the last step in lipoprotein maturation. The sequence is that of Apolipoprotein N-acyltransferase from Rhodopirellula baltica (strain DSM 10527 / NCIMB 13988 / SH1).